A 408-amino-acid chain; its full sequence is LL-diaminopimelate aminotransferase (408 aa).

The substrate site is built by tyrosine 15 and glycine 42. Pyridoxal 5'-phosphate is bound by residues tyrosine 72, 108 to 109, tyrosine 132, asparagine 187, tyrosine 218, and 246 to 248; these read SK and SFS. Lysine 109, tyrosine 132, and asparagine 187 together coordinate substrate. Position 249 is an N6-(pyridoxal phosphate)lysine (lysine 249). Pyridoxal 5'-phosphate is bound by residues arginine 257 and asparagine 292. 2 residues coordinate substrate: asparagine 292 and arginine 388.

Belongs to the class-I pyridoxal-phosphate-dependent aminotransferase family. LL-diaminopimelate aminotransferase subfamily. Homodimer. It depends on pyridoxal 5'-phosphate as a cofactor.

The catalysed reaction is (2S,6S)-2,6-diaminopimelate + 2-oxoglutarate = (S)-2,3,4,5-tetrahydrodipicolinate + L-glutamate + H2O + H(+). It participates in amino-acid biosynthesis; L-lysine biosynthesis via DAP pathway; LL-2,6-diaminopimelate from (S)-tetrahydrodipicolinate (aminotransferase route): step 1/1. Functionally, involved in the synthesis of meso-diaminopimelate (m-DAP or DL-DAP), required for both lysine and peptidoglycan biosynthesis. Catalyzes the direct conversion of tetrahydrodipicolinate to LL-diaminopimelate. In Parasynechococcus marenigrum (strain WH8102), this protein is LL-diaminopimelate aminotransferase.